The sequence spans 300 residues: uncharacterized protein (300 aa).

Transmembrane regions (helical) follow at residues 4-24 (IIIIMLFFLVSITWGTTWIAM), 31-51 (IPPFFATGIRFLAASPLLIIL), 68-88 (FQIFISIFYFSIPFTLMLYGG), 95-115 (ISSIIFANMPVLVLIISHFYL), 120-140 (NFIQKVGMVIALITLFFVLLI), 146-166 (CFFQWKGILALLLALLSHAVI), 177-197 (VSVITFNALPSLISGIFLSII), 214-234 (ILAVFYLGNFCGICGILSYFY), 242-262 (FYASIVFLIFPLIAGFLEIYI), and 272-292 (LWFIIPSGLGILLTLIPINFF). EamA domains are found at residues 15–139 (ITWG…FVLL) and 161–287 (LSHA…LTLI).

It belongs to the EamA transporter family.

Its subcellular location is the cell membrane. This is an uncharacterized protein from Buchnera aphidicola subsp. Schizaphis graminum (strain Sg).